The chain runs to 362 residues: Chorismate synthase (362 aa).

Arg-46 contacts NADP(+). FMN contacts are provided by residues 122–124, 238–239, Gly-278, 293–297, and Arg-319; these read RSS, NA, and KPTPS.

It belongs to the chorismate synthase family. In terms of assembly, homotetramer. The cofactor is FMNH2.

It catalyses the reaction 5-O-(1-carboxyvinyl)-3-phosphoshikimate = chorismate + phosphate. It functions in the pathway metabolic intermediate biosynthesis; chorismate biosynthesis; chorismate from D-erythrose 4-phosphate and phosphoenolpyruvate: step 7/7. Its function is as follows. Catalyzes the anti-1,4-elimination of the C-3 phosphate and the C-6 proR hydrogen from 5-enolpyruvylshikimate-3-phosphate (EPSP) to yield chorismate, which is the branch point compound that serves as the starting substrate for the three terminal pathways of aromatic amino acid biosynthesis. This reaction introduces a second double bond into the aromatic ring system. This Campylobacter jejuni subsp. jejuni serotype O:23/36 (strain 81-176) protein is Chorismate synthase.